The following is a 527-amino-acid chain: Pyruvate kinase 1, cytosolic (527 aa).

Arginine 58 lines the substrate pocket. 4 residues coordinate K(+): aspartate 60, serine 62, aspartate 92, and threonine 93. Residue 60–63 (DFSW) coordinates ATP. Residue lysine 256 participates in substrate binding. Glutamate 258 provides a ligand contact to Mg(2+). Positions 281, 282, and 313 each coordinate substrate. Asparagine 282 lines the Mg(2+) pocket.

This sequence belongs to the pyruvate kinase family. As to quaternary structure, homotetramer. Mg(2+) serves as cofactor. It depends on K(+) as a cofactor.

The protein localises to the cytoplasm. Its subcellular location is the cytosol. The enzyme catalyses pyruvate + ATP = phosphoenolpyruvate + ADP + H(+). The protein operates within carbohydrate degradation; glycolysis; pyruvate from D-glyceraldehyde 3-phosphate: step 5/5. Functionally, key regulatory enzyme of the glycolytic pathway that catalyzes the final step of glycolysis, converting ADP and phosphoenolpyruvate (PEP) to ATP and pyruvate by essentially irreversible transphosphorylation. Is critical for plant growth and development. The sequence is that of Pyruvate kinase 1, cytosolic from Oryza sativa subsp. indica (Rice).